The sequence spans 704 residues: Elongation factor G (704 aa).

Positions 8–290 (ARYRNIGISA…AVIDYLPSPV (283 aa)) constitute a tr-type G domain. GTP contacts are provided by residues 17-24 (AHIDAGKT), 88-92 (DTPGH), and 142-145 (NKMD).

Belongs to the TRAFAC class translation factor GTPase superfamily. Classic translation factor GTPase family. EF-G/EF-2 subfamily.

It is found in the cytoplasm. In terms of biological role, catalyzes the GTP-dependent ribosomal translocation step during translation elongation. During this step, the ribosome changes from the pre-translocational (PRE) to the post-translocational (POST) state as the newly formed A-site-bound peptidyl-tRNA and P-site-bound deacylated tRNA move to the P and E sites, respectively. Catalyzes the coordinated movement of the two tRNA molecules, the mRNA and conformational changes in the ribosome. This chain is Elongation factor G, found in Salmonella agona (strain SL483).